The primary structure comprises 819 residues: MWKWNVRRWAGARVNISKNRLSVINVGSRYLSTARSPLSKVRNIGIIAHIDAGKTTTTERMLYYAGISKHIGDVDTGDTITDFLEQERSRGITIQSAAISFPWRNTFAINLIDTPGHIDFTFEVIRALKVIDSCVVILDAVAGVEAQTEKVWKQSKSKPKICFINKMDRMGASFNHTVNDLINKFMRGTTTKPVLVNIPYYRKQPTSNDYVFQGVIDVVNGKRLTWNPENPDEIIVDELDGTSLEQCNRCRESMIETLTEYDEDLVQHFLEEAEGDYSKVSAQFLNASIRKLTMKNMIVPVLCGASFKNIGVQPLLDAIVNYLPSPIEAELPELNDKTVPMKYDPKVGCLVNNNKNLCIALAFKVITDPIRGKQIFIRIYSGTLNSGNTVYNSTTGEKFKLGKLLIPHAGTSQPVNILTAGQIGLLTGSTVENNISTGDTLITHSSKKDGLKSLDKKKELTLKINSIFIPPPVFGVSIEPRTLSNKKSMEEALNTLITEDPSLSISQNDETGQTVLNGMGELHLEIAKDRLVNDLKADVEFGQLMVSYKETINSETNIETYESDDGYRFSLSLLPNSDALPNCLAYPLGVNENFLIMEKNGNWDKEWKYQVSFESILNSIIASCIVGLQRGGKIANFPLYACSIKINSDWSVPPDIETPQEILKITRNLIFKALNDLKPEKYNLLEPIMNLDLTIPQSDVGTVLQDLTGARKAQILSIEDESSVSNSGASTCNSPENSNRIYIPSDAVTTLHATKDKKNTQETSSNVKKIIKAKVPLREITTYTNKLRSLSQGRGEFNIEYSDMEKVTNDRLQSILHDL.

A mitochondrion-targeting transit peptide spans M1 to Y30. Positions S39–I327 constitute a tr-type G domain. Residues A48–T55, D113–H117, and N165–D168 each bind GTP.

It belongs to the TRAFAC class translation factor GTPase superfamily. Classic translation factor GTPase family. EF-G/EF-2 subfamily.

It is found in the mitochondrion. In terms of biological role, mitochondrial GTPase that mediates the disassembly of ribosomes from messenger RNA at the termination of mitochondrial protein biosynthesis. Not involved in the GTP-dependent ribosomal translocation step during translation elongation. The chain is Ribosome-releasing factor 2, mitochondrial from Saccharomyces cerevisiae (strain RM11-1a) (Baker's yeast).